Here is a 352-residue protein sequence, read N- to C-terminus: Sphingosine 1-phosphate receptor 2 (352 aa).

Over 1–34 (MGGLYSEYLNPEKVQEHYNYTKETLDMQETPSRK) the chain is Extracellular. Asn-19 carries an N-linked (GlcNAc...) asparagine glycan. Residues 35–59 (VASAFIIILCCAIVVENLLVLIAVA) traverse the membrane as a helical segment. At 60–66 (RNSKFHS) the chain is on the cytoplasmic side. Residues 67-95 (AMYLFLGNLAASDLLAGVAFVANTLLSGP) form a helical membrane-spanning segment. Topologically, residues 96-109 (VTLSLTPLQWFARE) are extracellular. The helical transmembrane segment at 110–128 (GSAFITLSASVFSLLAIAI) threads the bilayer. Residues 129–147 (ERQVAIAKVKLYGSDKSCR) lie on the Cytoplasmic side of the membrane. A helical transmembrane segment spans residues 148–173 (MLMLIGASWLISLILGGLPILGWNCL). Residues 174-189 (DHLEACSTVLPLYAKH) lie on the Extracellular side of the membrane. The chain crosses the membrane as a helical span at residues 190–210 (YVLCVVTIFSVILLAIVALYV). Topologically, residues 211–233 (RIYFVVRSSHADVAGPQTLALLK) are cytoplasmic. A helical membrane pass occupies residues 234 to 255 (TVTIVLGVFIICWLPAFSILLL). Residues 256–271 (DSTCPVRACPVLYKAH) are Extracellular-facing. The helical transmembrane segment at 272 to 292 (YFFAFATLNSLLNPVIYTWRS) threads the bilayer. Topologically, residues 293–352 (RDLRREVLRPLLCWRQGKGATGRRGGNPGHRLLPLRSSSSLERGLHMPTSPTFLEGNTVV) are cytoplasmic. A lipid anchor (S-palmitoyl cysteine) is attached at Cys-305.

The protein belongs to the G-protein coupled receptor 1 family. As to expression, expressed in all developing tissues with highest levels detected in primitive, transformed cells. Relative abundance: lung &gt; kidney = skin = gut &gt; spleen &gt; brain &gt; liver.

It localises to the cell membrane. Receptor for the lysosphingolipid sphingosine 1-phosphate (S1P). S1P is a bioactive lysophospholipid that elicits diverse physiological effects on most types of cells and tissues. Receptor for the chemokine-like protein FAM19A5. Mediates the inhibitory effect of FAM19A5 on vascular smooth muscle cell proliferation and migration. In lymphoid follicles, couples the binding of S1P to the activation of GNA13 and downstream inhibition of AKT activation leading to suppression of germinal center (GC) B cell growth and migration outside the GC niche. In Rattus norvegicus (Rat), this protein is Sphingosine 1-phosphate receptor 2 (S1pr2).